Consider the following 169-residue polypeptide: Non-specific lipid transfer protein GPI-anchored 11 (169 aa).

A signal peptide spans 1 to 23 (MAYATILMIFSVVALMSGERAHA). Intrachain disulfides connect Cys-27–Cys-70, Cys-37–Cys-54, Cys-55–Cys-95, and Cys-68–Cys-105. Residue Ser-146 is the site of GPI-anchor amidated serine attachment. The propeptide at 147-169 (SDASLLSVSFAFVIFMALISSFY) is removed in mature form.

The protein belongs to the plant LTP family. Expressed in a vascular-specific manner, mainly in roots, and, to a lower extent, in hypocotyls, seedlings stems and flowers.

The protein localises to the cell membrane. It localises to the secreted. In terms of biological role, probable lipid transfer protein. Proteoglycan-like factor that exhibits xylogen activity consisting in mediating local and inductive cell-cell interactions required for xylem differentiation. In Arabidopsis thaliana (Mouse-ear cress), this protein is Non-specific lipid transfer protein GPI-anchored 11.